Consider the following 358-residue polypeptide: 3-isopropylmalate dehydrogenase (358 aa).

Position 77 to 90 (77 to 90) interacts with NAD(+); that stretch reads GPKWTNLPPDQQPE. Arg-98, Arg-108, Arg-137, and Asp-226 together coordinate substrate. Residues Asp-226, Asp-250, and Asp-254 each coordinate Mg(2+). 284–296 contributes to the NAD(+) binding site; the sequence is GSAPDIAGKGIAN.

The protein belongs to the isocitrate and isopropylmalate dehydrogenases family. LeuB type 1 subfamily. Homodimer. Requires Mg(2+) as cofactor. Mn(2+) serves as cofactor.

It localises to the cytoplasm. The catalysed reaction is (2R,3S)-3-isopropylmalate + NAD(+) = 4-methyl-2-oxopentanoate + CO2 + NADH. It functions in the pathway amino-acid biosynthesis; L-leucine biosynthesis; L-leucine from 3-methyl-2-oxobutanoate: step 3/4. Its function is as follows. Catalyzes the oxidation of 3-carboxy-2-hydroxy-4-methylpentanoate (3-isopropylmalate) to 3-carboxy-4-methyl-2-oxopentanoate. The product decarboxylates to 4-methyl-2 oxopentanoate. This Haemophilus influenzae (strain ATCC 51907 / DSM 11121 / KW20 / Rd) protein is 3-isopropylmalate dehydrogenase (leuB).